The sequence spans 105 residues: NADH-quinone oxidoreductase subunit K (105 aa).

3 consecutive transmembrane segments (helical) span residues proline 9–valine 29, isoleucine 34–phenylalanine 54, and isoleucine 65–isoleucine 85.

The protein belongs to the complex I subunit 4L family. In terms of assembly, NDH-1 is composed of 14 different subunits. Subunits NuoA, H, J, K, L, M, N constitute the membrane sector of the complex.

The protein resides in the cell membrane. It carries out the reaction a quinone + NADH + 5 H(+)(in) = a quinol + NAD(+) + 4 H(+)(out). Functionally, NDH-1 shuttles electrons from NADH, via FMN and iron-sulfur (Fe-S) centers, to quinones in the respiratory chain. The immediate electron acceptor for the enzyme in this species is believed to be a menaquinone. Couples the redox reaction to proton translocation (for every two electrons transferred, four hydrogen ions are translocated across the cytoplasmic membrane), and thus conserves the redox energy in a proton gradient. The protein is NADH-quinone oxidoreductase subunit K of Salinispora arenicola (strain CNS-205).